The sequence spans 199 residues: Rho-related protein racG (199 aa).

GTP-binding residues include Ala13, Gly15, Lys16, Thr17, Cys18, Tyr32, and Thr35. Thr17 is a Mg(2+) binding site. 2 short sequence motifs (switch) span residues Asn26–Phe37 and Asp57–Thr75. Thr35 lines the Mg(2+) pocket. GTP-binding residues include Lys116, Asp118, and Ala159. Residue Cys196 is modified to Cysteine methyl ester. Cys196 carries S-geranylgeranyl cysteine lipidation. Positions Ser197 to Phe199 are cleaved as a propeptide — removed in mature form.

It belongs to the small GTPase superfamily. Rho family. Mg(2+) is required as a cofactor.

The protein resides in the cell membrane. It localises to the cytoplasm. Its subcellular location is the cytoskeleton. It carries out the reaction GTP + H2O = GDP + phosphate + H(+). Regulated by guanine nucleotide exchange factors (GEFs) which promote the exchange of bound GDP for free GTP, GTPase activating proteins (GAPs) which increase the GTP hydrolysis activity, and GDP dissociation inhibitors which inhibit the dissociation of the nucleotide from the GTPase. Small GTPase which cycles between active GTP-bound and inactive GDP-bound states. Involved in actin cytoskeleton remodeling during capping of surface receptors and uroid formation. This is Rho-related protein racG from Entamoeba histolytica (strain ATCC 30459 / HM-1:IMSS / ABRM).